The following is a 478-amino-acid chain: Cysteine--tRNA ligase (478 aa).

A Zn(2+)-binding site is contributed by Cys29. A 'HIGH' region motif is present at residues 31 to 41 (VTVYDYCHLGH). Zn(2+)-binding residues include Cys213, His238, and Glu242. The short motif at 270–274 (KMSKS) is the 'KMSKS' region element. Residue Lys273 participates in ATP binding.

Belongs to the class-I aminoacyl-tRNA synthetase family. In terms of assembly, monomer. It depends on Zn(2+) as a cofactor.

It localises to the cytoplasm. The enzyme catalyses tRNA(Cys) + L-cysteine + ATP = L-cysteinyl-tRNA(Cys) + AMP + diphosphate. The protein is Cysteine--tRNA ligase of Synechococcus sp. (strain ATCC 27144 / PCC 6301 / SAUG 1402/1) (Anacystis nidulans).